Reading from the N-terminus, the 132-residue chain is L-ectoine synthase (132 aa).

Belongs to the ectoine synthase family.

The catalysed reaction is (2S)-4-acetamido-2-aminobutanoate = L-ectoine + H2O. Its pathway is amine and polyamine biosynthesis; ectoine biosynthesis; L-ectoine from L-aspartate 4-semialdehyde: step 3/3. Functionally, catalyzes the circularization of gamma-N-acetyl-alpha,gamma-diaminobutyric acid (ADABA) to ectoine (1,4,5,6-tetrahydro-2-methyl-4-pyrimidine carboxylic acid), which is an excellent osmoprotectant. The protein is L-ectoine synthase of Hahella chejuensis (strain KCTC 2396).